Here is a 78-residue protein sequence, read N- to C-terminus: U-scoloptoxin(04)-Er1d (78 aa).

The first 24 residues, 1-24 (MTRHLIFAAMLLVCLFVCWNAVGA), serve as a signal peptide directing secretion. A propeptide spanning residues 25–28 (RDAR) is cleaved from the precursor.

This sequence belongs to the scoloptoxin-04 family. Post-translationally, contains 2 disulfide bonds. In terms of tissue distribution, expressed by the venom gland.

The protein resides in the secreted. The sequence is that of U-scoloptoxin(04)-Er1d from Ethmostigmus rubripes (Giant centipede).